We begin with the raw amino-acid sequence, 216 residues long: tRNA (guanine-N(7)-)-methyltransferase (216 aa).

Residues E43, D68, N95, and N117 each coordinate S-adenosyl-L-methionine. Substrate-binding positions include D153 and 190 to 193 (TEYE).

This sequence belongs to the class I-like SAM-binding methyltransferase superfamily. TrmB family.

It catalyses the reaction guanosine(46) in tRNA + S-adenosyl-L-methionine = N(7)-methylguanosine(46) in tRNA + S-adenosyl-L-homocysteine. It participates in tRNA modification; N(7)-methylguanine-tRNA biosynthesis. In terms of biological role, catalyzes the formation of N(7)-methylguanine at position 46 (m7G46) in tRNA. This is tRNA (guanine-N(7)-)-methyltransferase from Desulfitobacterium hafniense (strain Y51).